The following is a 205-amino-acid chain: Holliday junction branch migration complex subunit RuvA (205 aa).

The tract at residues 1–64 (MIGHIQGVLT…EDAQLLYGFI (64 aa)) is domain I. Residues 65–143 (SASERSLFRL…DWQPSTPFTD (79 aa)) form a domain II region. The disordered stretch occupies residues 136-157 (QPSTPFTDRAPLDSQGMDAREH). The segment at 144–156 (RAPLDSQGMDARE) is flexible linker. A domain III region spans residues 157 to 205 (HPADARTDAISALQSLGYKENQAEKALQKVYSAEHNSETLIRLALKQLS).

Belongs to the RuvA family. In terms of assembly, homotetramer. Forms an RuvA(8)-RuvB(12)-Holliday junction (HJ) complex. HJ DNA is sandwiched between 2 RuvA tetramers; dsDNA enters through RuvA and exits via RuvB. An RuvB hexamer assembles on each DNA strand where it exits the tetramer. Each RuvB hexamer is contacted by two RuvA subunits (via domain III) on 2 adjacent RuvB subunits; this complex drives branch migration. In the full resolvosome a probable DNA-RuvA(4)-RuvB(12)-RuvC(2) complex forms which resolves the HJ.

It is found in the cytoplasm. In terms of biological role, the RuvA-RuvB-RuvC complex processes Holliday junction (HJ) DNA during genetic recombination and DNA repair, while the RuvA-RuvB complex plays an important role in the rescue of blocked DNA replication forks via replication fork reversal (RFR). RuvA specifically binds to HJ cruciform DNA, conferring on it an open structure. The RuvB hexamer acts as an ATP-dependent pump, pulling dsDNA into and through the RuvAB complex. HJ branch migration allows RuvC to scan DNA until it finds its consensus sequence, where it cleaves and resolves the cruciform DNA. The sequence is that of Holliday junction branch migration complex subunit RuvA from Idiomarina loihiensis (strain ATCC BAA-735 / DSM 15497 / L2-TR).